The chain runs to 491 residues: Cytochrome P450 2H2 (491 aa).

Cys436 lines the heme pocket.

It belongs to the cytochrome P450 family. Heme is required as a cofactor.

Its subcellular location is the endoplasmic reticulum membrane. The protein resides in the microsome membrane. The enzyme catalyses an organic molecule + reduced [NADPH--hemoprotein reductase] + O2 = an alcohol + oxidized [NADPH--hemoprotein reductase] + H2O + H(+). Its function is as follows. Cytochromes P450 are a group of heme-thiolate monooxygenases. In liver microsomes, this enzyme is involved in an NADPH-dependent electron transport pathway. It oxidizes a variety of structurally unrelated compounds, including steroids, fatty acids, and xenobiotics. The chain is Cytochrome P450 2H2 (CYP2H2) from Gallus gallus (Chicken).